Reading from the N-terminus, the 167-residue chain is uncharacterized protein (167 aa).

Helical transmembrane passes span 96 to 115 (YVPAFIPLFAAYLTMFFNFY) and 119 to 138 (WGALSFAAGTIAAIVWIIAV).

It localises to the cell membrane. This is an uncharacterized protein from Bacillus subtilis (strain 168).